Reading from the N-terminus, the 128-residue chain is Protein BEX1 (128 aa).

The segment at 1–37 (MESKEKRAVNNLSMENTNQENEEKEEKEQVANKGEPL) is disordered. S105 carries the post-translational modification Phosphoserine. The disordered stretch occupies residues 107–128 (SLRAVSTDPPHHDHHDEFCLMP). Positions 115 to 128 (PPHHDHHDEFCLMP) are enriched in basic and acidic residues. Residues 117-121 (HHDHH) are his cluster. Position 125 (C125) interacts with Zn(2+).

It belongs to the BEX family. As to quaternary structure, interacts with neurotrophin receptor p75NTR/NGFR. Interacts with OMP. Phosphorylated. Phosphorylation of Ser-105 protects it from the proteasome. In terms of processing, ubiquitinated. Degraded by the proteasome.

The protein localises to the nucleus. The protein resides in the cytoplasm. Its function is as follows. Signaling adapter molecule involved in p75NTR/NGFR signaling. Plays a role in cell cycle progression and neuronal differentiation. Inhibits neuronal differentiation in response to nerve growth factor (NGF). May act as a link between the cell cycle and neurotrophic factor signaling, possibly by functioning as an upstream modulator of receptor signaling, coordinating biological responses to external signals with internal cellular states. In absence of reductive stress, acts as a pseudosubstrate for the CRL2(FEM1B) complex: associates with FEM1B via zinc, thereby preventing association between FEM1B and its substrates. This chain is Protein BEX1 (BEX1), found in Macaca fascicularis (Crab-eating macaque).